The chain runs to 321 residues: Methionine import ATP-binding protein MetN (321 aa).

The region spanning I2–G237 is the ABC transporter domain. G34–S41 lines the ATP pocket.

It belongs to the ABC transporter superfamily. Methionine importer (TC 3.A.1.24) family. In terms of assembly, the complex is composed of two ATP-binding proteins (MetN), two transmembrane proteins (MetI) and a solute-binding protein (MetQ).

The protein resides in the cell membrane. It catalyses the reaction L-methionine(out) + ATP + H2O = L-methionine(in) + ADP + phosphate + H(+). The enzyme catalyses D-methionine(out) + ATP + H2O = D-methionine(in) + ADP + phosphate + H(+). Its function is as follows. Part of the ABC transporter complex MetNIQ involved in methionine import. Responsible for energy coupling to the transport system. The polypeptide is Methionine import ATP-binding protein MetN (Clostridioides difficile (strain 630) (Peptoclostridium difficile)).